The primary structure comprises 253 residues: Ubiquinone/menaquinone biosynthesis C-methyltransferase UbiE (253 aa).

Residues threonine 76, aspartate 97, and 125-126 (NA) each bind S-adenosyl-L-methionine.

Belongs to the class I-like SAM-binding methyltransferase superfamily. MenG/UbiE family.

The enzyme catalyses a 2-demethylmenaquinol + S-adenosyl-L-methionine = a menaquinol + S-adenosyl-L-homocysteine + H(+). The catalysed reaction is a 2-methoxy-6-(all-trans-polyprenyl)benzene-1,4-diol + S-adenosyl-L-methionine = a 5-methoxy-2-methyl-3-(all-trans-polyprenyl)benzene-1,4-diol + S-adenosyl-L-homocysteine + H(+). It functions in the pathway quinol/quinone metabolism; menaquinone biosynthesis; menaquinol from 1,4-dihydroxy-2-naphthoate: step 2/2. Its pathway is cofactor biosynthesis; ubiquinone biosynthesis. Its function is as follows. Methyltransferase required for the conversion of demethylmenaquinol (DMKH2) to menaquinol (MKH2) and the conversion of 2-polyprenyl-6-methoxy-1,4-benzoquinol (DDMQH2) to 2-polyprenyl-3-methyl-6-methoxy-1,4-benzoquinol (DMQH2). This is Ubiquinone/menaquinone biosynthesis C-methyltransferase UbiE from Nitrobacter hamburgensis (strain DSM 10229 / NCIMB 13809 / X14).